The primary structure comprises 591 residues: Aspartate--tRNA(Asp/Asn) ligase (591 aa).

Residue Glu176 participates in L-aspartate binding. Positions Gln200–Lys203 are aspartate. Arg222 contributes to the L-aspartate binding site. ATP-binding positions include Arg222–Glu224 and Gln231. An L-aspartate-binding site is contributed by His450. Position 484 (Glu484) interacts with ATP. Arg491 provides a ligand contact to L-aspartate. An ATP-binding site is contributed by Gly536–Arg539.

The protein belongs to the class-II aminoacyl-tRNA synthetase family. Type 1 subfamily. As to quaternary structure, homodimer.

It localises to the cytoplasm. The enzyme catalyses tRNA(Asx) + L-aspartate + ATP = L-aspartyl-tRNA(Asx) + AMP + diphosphate. Its function is as follows. Aspartyl-tRNA synthetase with relaxed tRNA specificity since it is able to aspartylate not only its cognate tRNA(Asp) but also tRNA(Asn). Reaction proceeds in two steps: L-aspartate is first activated by ATP to form Asp-AMP and then transferred to the acceptor end of tRNA(Asp/Asn). The sequence is that of Aspartate--tRNA(Asp/Asn) ligase from Bacillus cereus (strain ATCC 10987 / NRS 248).